The chain runs to 906 residues: Protein translocase subunit SecA (906 aa).

ATP is bound by residues Q89, 107 to 111, and D502; that span reads GEGKT. Zn(2+) contacts are provided by C890, C892, C901, and H902.

It belongs to the SecA family. Monomer and homodimer. Part of the essential Sec protein translocation apparatus which comprises SecA, SecYEG and auxiliary proteins SecDF-YajC and YidC. Zn(2+) serves as cofactor.

It localises to the cell inner membrane. It is found in the cytoplasm. It carries out the reaction ATP + H2O + cellular proteinSide 1 = ADP + phosphate + cellular proteinSide 2.. Its function is as follows. Part of the Sec protein translocase complex. Interacts with the SecYEG preprotein conducting channel. Has a central role in coupling the hydrolysis of ATP to the transfer of proteins into and across the cell membrane, serving both as a receptor for the preprotein-SecB complex and as an ATP-driven molecular motor driving the stepwise translocation of polypeptide chains across the membrane. The sequence is that of Protein translocase subunit SecA from Brucella suis biovar 1 (strain 1330).